The primary structure comprises 350 residues: Hydroxymethylglutaryl-CoA synthase (350 aa).

Glu-83 functions as the Proton donor/acceptor in the catalytic mechanism. The Acyl-thioester intermediate role is filled by Cys-115. The (3S)-3-hydroxy-3-methylglutaryl-CoA site is built by Cys-115 and Thr-156. Arg-204 serves as a coordination point for CoA. Residues Thr-206 and His-239 each contribute to the (3S)-3-hydroxy-3-methylglutaryl-CoA site. Catalysis depends on His-239, which acts as the Proton donor/acceptor. Lys-244 contacts CoA. (3S)-3-hydroxy-3-methylglutaryl-CoA-binding residues include Asn-271 and Ser-301.

It belongs to the thiolase-like superfamily. Archaeal HMG-CoA synthase family. In terms of assembly, interacts with acetoacetyl-CoA thiolase that catalyzes the precedent step in the pathway and with a DUF35 protein. The acetoacetyl-CoA thiolase/HMG-CoA synthase complex channels the intermediate via a fused CoA-binding site, which allows for efficient coupling of the endergonic thiolase reaction with the exergonic HMGCS reaction.

It carries out the reaction acetoacetyl-CoA + acetyl-CoA + H2O = (3S)-3-hydroxy-3-methylglutaryl-CoA + CoA + H(+). Its pathway is metabolic intermediate biosynthesis; (R)-mevalonate biosynthesis; (R)-mevalonate from acetyl-CoA: step 2/3. Functionally, catalyzes the condensation of acetyl-CoA with acetoacetyl-CoA to form 3-hydroxy-3-methylglutaryl-CoA (HMG-CoA). Functions in the mevalonate (MVA) pathway leading to isopentenyl diphosphate (IPP), a key precursor for the biosynthesis of isoprenoid compounds that are building blocks of archaeal membrane lipids. This chain is Hydroxymethylglutaryl-CoA synthase, found in Thermococcus sibiricus (strain DSM 12597 / MM 739).